The following is a 507-amino-acid chain: ATP synthase subunit alpha, chloroplastic (507 aa).

170-177 (GDRQTGKT) serves as a coordination point for ATP.

Belongs to the ATPase alpha/beta chains family. F-type ATPases have 2 components, CF(1) - the catalytic core - and CF(0) - the membrane proton channel. CF(1) has five subunits: alpha(3), beta(3), gamma(1), delta(1), epsilon(1). CF(0) has four main subunits: a, b, b' and c.

It is found in the plastid. The protein resides in the chloroplast thylakoid membrane. It carries out the reaction ATP + H2O + 4 H(+)(in) = ADP + phosphate + 5 H(+)(out). Produces ATP from ADP in the presence of a proton gradient across the membrane. The alpha chain is a regulatory subunit. This Chloranthus spicatus (Chulantree) protein is ATP synthase subunit alpha, chloroplastic.